A 201-amino-acid chain; its full sequence is Recombination protein RecR (201 aa).

A C4-type zinc finger spans residues 59–74 (CEICGNMDTENMCRIC). The Toprim domain maps to 82–177 (SIIAIVETVA…KISRLASGIP (96 aa)).

This sequence belongs to the RecR family.

Functionally, may play a role in DNA repair. It seems to be involved in an RecBC-independent recombinational process of DNA repair. It may act with RecF and RecO. The sequence is that of Recombination protein RecR from Rickettsia africae (strain ESF-5).